Reading from the N-terminus, the 692-residue chain is PTS system glucoside-specific EIICBA component (692 aa).

One can recognise a PTS EIIC type-1 domain in the interval 6-430 (KKFFGQLQRI…LNLKTPGRED (425 aa)). Transmembrane regions (helical) follow at residues 15-35 (IGKALMLPVAILPAAGILLTF), 84-104 (LGLAGGDGVAGIAALVGYLIM), 140-160 (LVLGIPTLQTGVFGGIIIGAL), 185-205 (FVPIITSLVAIVTGIVLSFVW), 215-235 (LSNFLLGKNLALTTFIFGIIE), 287-307 (AFTTGKYPFMMFGLPAAAFAI), 318-338 (VVGGLMLSAALTSFLTGITEP), 344-364 (LFVAPILYVAHVILAGTSFLI), 370-390 (VQIGMTFSGGFIDYILYGLLS), and 398-418 (LVIPVGIAYALIYYFLFTFLI). In terms of domain architecture, PTS EIIB type-1 spans 441–522 (SELPFEVLEA…QQIMDGKITS (82 aa)). C463 functions as the Phosphocysteine intermediate; for EIIB activity in the catalytic mechanism. The PTS EIIA type-1 domain occupies 563 to 667 (DKVFSAKMMG…DTITPIIITN (105 aa)). Catalysis depends on H615, which acts as the Tele-phosphohistidine intermediate; for EIIA activity.

The protein localises to the cell membrane. With respect to regulation, inhibited by methyl alpha-D-glucoside, methyl beta-D-glucoside, p-nitrophenyl alpha-D-glucoside, o-nitrophenyl beta-D-glucoside and salicin, but not by 2-deoxyglucose. Its function is as follows. The phosphoenolpyruvate-dependent sugar phosphotransferase system (sugar PTS), a major carbohydrate active -transport system, catalyzes the phosphorylation of incoming sugar substrates concomitantly with their translocation across the cell membrane. This system is involved in alpha- and beta-glucoside transport. Can also transport glucose, but not galactose, fructose, mannose, cellobiose, sucrose, maltose, lactose, melibiose and trehalose, as well as N-acetylglucosamine. In Staphylococcus carnosus (strain TM300), this protein is PTS system glucoside-specific EIICBA component (glcB).